We begin with the raw amino-acid sequence, 437 residues long: Gamma-glutamyl phosphate reductase (437 aa).

It belongs to the gamma-glutamyl phosphate reductase family.

It localises to the cytoplasm. The catalysed reaction is L-glutamate 5-semialdehyde + phosphate + NADP(+) = L-glutamyl 5-phosphate + NADPH + H(+). The protein operates within amino-acid biosynthesis; L-proline biosynthesis; L-glutamate 5-semialdehyde from L-glutamate: step 2/2. Catalyzes the NADPH-dependent reduction of L-glutamate 5-phosphate into L-glutamate 5-semialdehyde and phosphate. The product spontaneously undergoes cyclization to form 1-pyrroline-5-carboxylate. The chain is Gamma-glutamyl phosphate reductase from Synechococcus sp. (strain CC9902).